A 320-amino-acid chain; its full sequence is Malate dehydrogenase (320 aa).

Residues 10-15 and Asp34 each bind NAD(+); that span reads GSGMIG. Substrate-binding residues include Arg83 and Arg89. Residues Asn96 and 119–121 each bind NAD(+); that span reads ITN. Residues Asn121 and Arg152 each contribute to the substrate site. Catalysis depends on His176, which acts as the Proton acceptor.

This sequence belongs to the LDH/MDH superfamily. MDH type 3 family.

It catalyses the reaction (S)-malate + NAD(+) = oxaloacetate + NADH + H(+). Catalyzes the reversible oxidation of malate to oxaloacetate. In Hyphomonas neptunium (strain ATCC 15444), this protein is Malate dehydrogenase.